Here is a 783-residue protein sequence, read N- to C-terminus: Tricorn protease-interacting factor F2 (783 aa).

Substrate is bound by residues glutamate 107 and 236–240; that span reads GAMEN. Residue histidine 271 coordinates Zn(2+). Catalysis depends on glutamate 272, which acts as the Proton acceptor. Residues histidine 275 and glutamate 294 each contribute to the Zn(2+) site.

It belongs to the peptidase M1 family. Monomer. Part of the Tricorn proteolytic complex. The cofactor is Zn(2+).

Its subcellular location is the cytoplasm. In terms of biological role, proteases F1, F2 and F3 degrade oligopeptides produced by Tricorn (themselves probably produced by the proteasome), yielding free amino acids. The chain is Tricorn protease-interacting factor F2 (trf2) from Thermoplasma volcanium (strain ATCC 51530 / DSM 4299 / JCM 9571 / NBRC 15438 / GSS1).